Consider the following 591-residue polypeptide: MMRSHYCGQLNESLDGQEVTLCGWVHRRRDHGGVIFLDIRDREGMAQVVFDPDRAETFAAADRVRSEYVVQITGKVRKRPDGAVNANMASGAIEILGYQLNVLNEAETPPFPLNEYSDVGEETRLRYRFIDLRRPEMADKLRLRSRITSSIRRFLDENGFLDVETPILTRATPEGARDYLVPSRTHAGSFFALPQSPQLFKQLLMVAGFDRYYQIAKCFRDEDLRADRQPEFTQIDIETSFLDESEIMGLTESMIRKLFKEVLDLEFGEFPHMTFEEAMRRYGSDKPDLRNPLELVDVADQLKDVDFKVFAGPANDPKCRVTALRLPGGASMPRSKIDEYTKFVGIYGARGLAYIKVNERAKGVEGLQSPIVKNIPEANLNVILDRVGAVDGDIVFFGADKFKVVSEALGALRIRLGHDFELLTCEWAPMWVVDFPMFEENEDGSFTALHHPFTAPKCTPEELEANPATALSRAYDMVLNGTELGGGSIRIHRKEMQQAVFRLLGIEAAEQEEKFGFLLDALKFGAPPHGGLAFGLDRLVMLMTGAQSIREVIAFPKTQSAACVMTQAPGLVDAKALRELHIRLREQTKVE.

E174 serves as a coordination point for L-aspartate. An aspartate region spans residues 198 to 201 (QLFK). L-aspartate is bound at residue R220. ATP is bound by residues 220 to 222 (RDE) and Q229. Residue H450 participates in L-aspartate binding. E483 contributes to the ATP binding site. Position 490 (R490) interacts with L-aspartate. 535 to 538 (GLDR) contributes to the ATP binding site.

Belongs to the class-II aminoacyl-tRNA synthetase family. Type 1 subfamily. Homodimer.

Its subcellular location is the cytoplasm. The enzyme catalyses tRNA(Asx) + L-aspartate + ATP = L-aspartyl-tRNA(Asx) + AMP + diphosphate. Functionally, aspartyl-tRNA synthetase with relaxed tRNA specificity since it is able to aspartylate not only its cognate tRNA(Asp) but also tRNA(Asn). Reaction proceeds in two steps: L-aspartate is first activated by ATP to form Asp-AMP and then transferred to the acceptor end of tRNA(Asp/Asn). This Pseudomonas putida (strain W619) protein is Aspartate--tRNA(Asp/Asn) ligase.